Reading from the N-terminus, the 199-residue chain is FMN-dependent NADH:quinone oxidoreductase (199 aa).

FMN is bound by residues 17–19 (SNS) and 87–90 (MYNF).

It belongs to the azoreductase type 1 family. As to quaternary structure, homodimer. FMN serves as cofactor.

The catalysed reaction is 2 a quinone + NADH + H(+) = 2 a 1,4-benzosemiquinone + NAD(+). The enzyme catalyses N,N-dimethyl-1,4-phenylenediamine + anthranilate + 2 NAD(+) = 2-(4-dimethylaminophenyl)diazenylbenzoate + 2 NADH + 2 H(+). Quinone reductase that provides resistance to thiol-specific stress caused by electrophilic quinones. Its function is as follows. Also exhibits azoreductase activity. Catalyzes the reductive cleavage of the azo bond in aromatic azo compounds to the corresponding amines. The protein is FMN-dependent NADH:quinone oxidoreductase of Mycoplasma mycoides subsp. mycoides SC (strain CCUG 32753 / NCTC 10114 / PG1).